Reading from the N-terminus, the 349-residue chain is GTP 3',8-cyclase (349 aa).

Residues 24 to 250 (PFGRAVTYLR…DIPYRTGGPA (227 aa)) enclose the Radical SAM core domain. Arg33 serves as a coordination point for GTP. Residues Cys40 and Cys44 each contribute to the [4Fe-4S] cluster site. Residue Tyr46 participates in S-adenosyl-L-methionine binding. Cys47 is a binding site for [4Fe-4S] cluster. GTP is bound at residue Arg82. Gly86 serves as a coordination point for S-adenosyl-L-methionine. Thr116 is a GTP binding site. Ser140 contributes to the S-adenosyl-L-methionine binding site. Position 176 (Lys176) interacts with GTP. S-adenosyl-L-methionine is bound at residue Met210. Cys273 and Cys276 together coordinate [4Fe-4S] cluster. 278–280 (RVR) contributes to the GTP binding site. Cys290 is a binding site for [4Fe-4S] cluster.

The protein belongs to the radical SAM superfamily. MoaA family. In terms of assembly, monomer and homodimer. It depends on [4Fe-4S] cluster as a cofactor.

It catalyses the reaction GTP + AH2 + S-adenosyl-L-methionine = (8S)-3',8-cyclo-7,8-dihydroguanosine 5'-triphosphate + 5'-deoxyadenosine + L-methionine + A + H(+). Its pathway is cofactor biosynthesis; molybdopterin biosynthesis. Its function is as follows. Catalyzes the cyclization of GTP to (8S)-3',8-cyclo-7,8-dihydroguanosine 5'-triphosphate. This chain is GTP 3',8-cyclase, found in Rhizobium meliloti (strain 1021) (Ensifer meliloti).